Here is a 313-residue protein sequence, read N- to C-terminus: Protoheme IX farnesyltransferase (313 aa).

The next 8 membrane-spanning stretches (helical) occupy residues 34 to 54 (VIELLLVTTIPAMLLADRGTV), 56 to 76 (PLLIINTLVGGLLAAAGANTL), 105 to 125 (HALIFGLTLSVASFFWLWSTT), 128 to 148 (LSAHLAGATIAFYVLVYTLLL), 152 to 172 (TSQNVVWGGAAGCMPVMIGWS), 173 to 193 (AVTGTIQWPALVMFLIIFFWT), 237 to 257 (VLATLALALTTGWLYASVAIL), and 291 to 311 (YLAVVFVALAVDSALALPTLL).

This sequence belongs to the UbiA prenyltransferase family. Protoheme IX farnesyltransferase subfamily.

The protein resides in the cell membrane. The catalysed reaction is heme b + (2E,6E)-farnesyl diphosphate + H2O = Fe(II)-heme o + diphosphate. It functions in the pathway porphyrin-containing compound metabolism; heme O biosynthesis; heme O from protoheme: step 1/1. Its function is as follows. Converts heme B (protoheme IX) to heme O by substitution of the vinyl group on carbon 2 of heme B porphyrin ring with a hydroxyethyl farnesyl side group. This Mycolicibacterium gilvum (strain PYR-GCK) (Mycobacterium gilvum (strain PYR-GCK)) protein is Protoheme IX farnesyltransferase.